Consider the following 495-residue polypeptide: Putative aldehyde dehydrogenase AldA (495 aa).

212-218 (GKGSESG) provides a ligand contact to NAD(+). Active-site residues include glutamate 256 and cysteine 290.

The protein belongs to the aldehyde dehydrogenase family.

The catalysed reaction is an aldehyde + NAD(+) + H2O = a carboxylate + NADH + 2 H(+). The protein is Putative aldehyde dehydrogenase AldA (aldA) of Staphylococcus aureus (strain MRSA252).